Reading from the N-terminus, the 125-residue chain is Small ribosomal subunit protein uS12m (125 aa).

Positions methionine 1 to arginine 50 are disordered. The segment covering histidine 10–alanine 23 has biased composition (basic and acidic residues).

It belongs to the universal ribosomal protein uS12 family.

It localises to the mitochondrion. Protein S12 is involved in the translation initiation step. The polypeptide is Small ribosomal subunit protein uS12m (RPS12) (Petunia hybrida (Petunia)).